We begin with the raw amino-acid sequence, 64 residues long: Small, acid-soluble spore protein H (64 aa).

It belongs to the SspH family.

Its subcellular location is the spore core. The sequence is that of Small, acid-soluble spore protein H from Acetivibrio thermocellus (strain ATCC 27405 / DSM 1237 / JCM 9322 / NBRC 103400 / NCIMB 10682 / NRRL B-4536 / VPI 7372) (Clostridium thermocellum).